Reading from the N-terminus, the 72-residue chain is Dermaseptin-A4 (72 aa).

The N-terminal stretch at 1–22 is a signal peptide; that stretch reads MAFLKKSLFLVLFLGMVSLSIC. Positions 23 to 41 are excised as a propeptide; the sequence is EEEKREEENEQEDDEQSEE. Positions 24–43 are disordered; the sequence is EEKREEENEQEDDEQSEEKR. Residues 30 to 39 are compositionally biased toward acidic residues; sequence ENEQEDDEQS. Ala-69 is modified (alanine amide). The propeptide occupies 71–72; the sequence is EQ.

It belongs to the frog skin active peptide (FSAP) family. Dermaseptin subfamily. In terms of tissue distribution, expressed by the skin glands.

It localises to the secreted. Functionally, possesses a potent antimicrobial activity against Gram-positive and Gram-negative bacteria. Probably acts by disturbing membrane functions with its amphipathic structure. The sequence is that of Dermaseptin-A4 from Agalychnis annae (Blue-sided leaf frog).